The primary structure comprises 427 residues: 3-phosphoshikimate 1-carboxyvinyltransferase (427 aa).

Lysine 22, serine 23, and arginine 27 together coordinate 3-phosphoshikimate. Lysine 22 serves as a coordination point for phosphoenolpyruvate. Glycine 96 and arginine 124 together coordinate phosphoenolpyruvate. Residues serine 169, serine 170, glutamine 171, serine 197, aspartate 313, asparagine 336, and lysine 340 each coordinate 3-phosphoshikimate. A phosphoenolpyruvate-binding site is contributed by glutamine 171. Aspartate 313 serves as the catalytic Proton acceptor. Residues arginine 344, arginine 386, and lysine 411 each contribute to the phosphoenolpyruvate site.

This sequence belongs to the EPSP synthase family. As to quaternary structure, monomer.

Its subcellular location is the cytoplasm. It catalyses the reaction 3-phosphoshikimate + phosphoenolpyruvate = 5-O-(1-carboxyvinyl)-3-phosphoshikimate + phosphate. It functions in the pathway metabolic intermediate biosynthesis; chorismate biosynthesis; chorismate from D-erythrose 4-phosphate and phosphoenolpyruvate: step 6/7. Catalyzes the transfer of the enolpyruvyl moiety of phosphoenolpyruvate (PEP) to the 5-hydroxyl of shikimate-3-phosphate (S3P) to produce enolpyruvyl shikimate-3-phosphate and inorganic phosphate. In Enterobacter sp. (strain 638), this protein is 3-phosphoshikimate 1-carboxyvinyltransferase.